We begin with the raw amino-acid sequence, 3118 residues long: Laminin subunit alpha-2 (3118 aa).

Positions 1-19 (MPAATAGILLLLLLGTLEG) are cleaved as a signal peptide. One can recognise a Laminin N-terminal domain in the interval 31-282 (QQRGLFPAVL…SVKDISVGGM (252 aa)). Asn51 and Asn85 each carry an N-linked (GlcNAc...) asparagine glycan. 6 disulfides stabilise this stretch: Cys283-Cys292, Cys285-Cys303, Cys305-Cys314, Cys317-Cys337, Cys340-Cys349, and Cys342-Cys374. 4 Laminin EGF-like domains span residues 283–339 (CICY…ECEA), 340–409 (CNCH…PCQP), 410–464 (CHCD…DCQP), and 465–513 (CNCS…GCEE). A glycan (N-linked (GlcNAc...) asparagine) is linked at Asn299. Asn359 and Asn376 each carry an N-linked (GlcNAc...) asparagine glycan. 10 disulfide bridges follow: Cys377/Cys386, Cys389/Cys407, Cys410/Cys422, Cys412/Cys438, Cys440/Cys449, Cys452/Cys462, Cys465/Cys478, Cys467/Cys482, Cys484/Cys493, and Cys496/Cys511. N-linked (GlcNAc...) asparagine glycosylation is present at Asn466. Positions 514–523 (CFCSGVSNRC) constitute a Laminin EGF-like 5; first part domain. Residues 527 to 719 (YWTYGNIQDM…DRRIATDVEV (193 aa)) enclose the Laminin IV type A 1 domain. Positions 720–752 (CQCPPGYSGSSCETCWPRHRRVNGTIFGGICEP) constitute a Laminin EGF-like 5; second part domain. Asn742 is a glycosylation site (N-linked (GlcNAc...) asparagine). 32 cysteine pairs are disulfide-bonded: Cys753–Cys762, Cys755–Cys769, Cys772–Cys781, Cys784–Cys800, Cys803–Cys818, Cys805–Cys828, Cys831–Cys840, Cys843–Cys858, Cys861–Cys875, Cys863–Cys882, Cys885–Cys894, Cys897–Cys911, Cys914–Cys926, Cys916–Cys933, Cys935–Cys944, Cys947–Cys960, Cys963–Cys975, Cys965–Cys981, Cys983–Cys992, Cys995–Cys1007, Cys1010–Cys1019, Cys1012–Cys1026, Cys1028–Cys1037, Cys1040–Cys1053, Cys1056–Cys1068, Cys1058–Cys1075, Cys1077–Cys1086, Cys1089–Cys1099, Cys1102–Cys1114, Cys1104–Cys1130, Cys1132–Cys1141, and Cys1144–Cys1159. Laminin EGF-like domains follow at residues 753 to 802 (CQCF…DCQP), 803 to 860 (CACP…SCQP), 861 to 913 (CQCN…NCQP), 914 to 962 (CRCN…GCLP), 963 to 1009 (CNCN…GCIA), 1010 to 1055 (CDCS…GCKV), 1056 to 1101 (CNCS…LCTL), and 1102 to 1161 (CDCF…GCSS). The N-linked (GlcNAc...) asparagine glycan is linked to Asn919. A glycan (N-linked (GlcNAc...) asparagine) is linked at Asn1031. Asn1057 carries N-linked (GlcNAc...) asparagine glycosylation. The region spanning 1162-1171 (CYCFGVTSQC) is the Laminin EGF-like 14; first part domain. One can recognise a Laminin IV type A 2 domain in the interval 1172-1375 (SEAKGLIRTW…GSPPAHLIER (204 aa)). Residues 1376–1415 (CDCPPGYSGLSCETCAPGFYRLRSEPGGRTPGPTLGTCVP) enclose the Laminin EGF-like 14; second part domain. 13 cysteine pairs are disulfide-bonded: Cys1378/Cys1387, Cys1416/Cys1425, Cys1418/Cys1432, Cys1435/Cys1444, Cys1447/Cys1462, Cys1465/Cys1480, Cys1467/Cys1490, Cys1493/Cys1502, Cys1505/Cys1520, Cys1523/Cys1535, Cys1525/Cys1542, Cys1544/Cys1553, and Cys1556/Cys1567. 3 consecutive Laminin EGF-like domains span residues 1416–1464 (CQCN…DCQP), 1465–1522 (CACP…SCQE), and 1523–1569 (CECD…ECVF). Residues 1570 to 2140 (CGDECTGLLL…NQARKQANSI (571 aa)) are domain II and I. Residues Asn1593, Asn1610, Asn1696, Asn1806, Asn1897, Asn1912, Asn1916, Asn2013, Asn2024, Asn2041, Asn2122, and Asn2236 are each glycosylated (N-linked (GlcNAc...) asparagine). Residues 1662–1863 (QDAERTNSRA…DIKTKLPPMS (202 aa)) are a coiled coil. Positions 1923-2146 (AYSNIKDYID…ANSIKVSVSS (224 aa)) form a coiled coil. 5 Laminin G-like domains span residues 2141-2324 (KVSV…CKGC), 2336-2517 (TIQF…TKGC), 2522-2706 (VYTV…IGRC), 2759-2930 (SKQF…VGTC), and 2929-3115 (TCFA…PVSC). The cysteines at positions 2298 and 2324 are disulfide-linked. N-linked (GlcNAc...) asparagine glycosylation is found at Asn2356, Asn2431, and Asn2474. Cys2491 and Cys2517 are oxidised to a cystine. Asn2547, Asn2554, and Asn2644 each carry an N-linked (GlcNAc...) asparagine glycan. Cys2679 and Cys2706 are joined by a disulfide. N-linked (GlcNAc...) asparagine glycosylation occurs at Asn2889. 2 disulfides stabilise this stretch: Cys2905-Cys2930 and Cys3083-Cys3115.

Laminin is a complex glycoprotein, consisting of three different polypeptide chains (alpha, beta, gamma), which are bound to each other by disulfide bonds into a cross-shaped molecule comprising one long and three short arms with globules at each end. Alpha-2 is a subunit of laminin-2 (laminin-211 or merosin), laminin-4 (laminin-221 or S-merosin) and laminin-12 (laminin-213). Interacts with FBLN1, FBLN2 and NID2.

It localises to the secreted. The protein localises to the extracellular space. The protein resides in the extracellular matrix. Its subcellular location is the basement membrane. Its function is as follows. Binding to cells via a high affinity receptor, laminin is thought to mediate the attachment, migration and organization of cells into tissues during embryonic development by interacting with other extracellular matrix components. The polypeptide is Laminin subunit alpha-2 (Lama2) (Mus musculus (Mouse)).